The primary structure comprises 160 residues: Transcriptional repressor NrdR (160 aa).

A zinc finger lies at 3–34 (CPACNYNGTKVLDSRPVQDFGSIRRRRECESC). In terms of domain architecture, ATP-cone spans 49-139 (LIIVKKDGTR…VYKQFKDINV (91 aa)).

It belongs to the NrdR family. Zn(2+) serves as cofactor.

Its function is as follows. Negatively regulates transcription of bacterial ribonucleotide reductase nrd genes and operons by binding to NrdR-boxes. The chain is Transcriptional repressor NrdR from Exiguobacterium sibiricum (strain DSM 17290 / CCUG 55495 / CIP 109462 / JCM 13490 / 255-15).